The sequence spans 743 residues: Threonine synthase-like 1 (743 aa).

An N6-acetyllysine modification is found at Lys281. Lys351 carries the N6-(pyridoxal phosphate)lysine modification.

Belongs to the threonine synthase family. It depends on pyridoxal 5'-phosphate as a cofactor.

The polypeptide is Threonine synthase-like 1 (THNSL1) (Pongo abelii (Sumatran orangutan)).